The primary structure comprises 1521 residues: Probable DNA topoisomerase 2 (1521 aa).

The span at 1–10 shows a compositional bias: acidic residues; it reads MSDSENDYSD. The tract at residues 1 to 87 is disordered; sequence MSDSENDYSD…DDKSSSSDNE (87 aa). Basic residues predominate over residues 36–48; that stretch reads SKKKASATRKPAA. Low complexity predominate over residues 49–62; it reads KKATTTTTSTTKKS. ATP contacts are provided by residues Asn163, Asn192, 220–222, and 233–240; these read SSH and GRNGFGAK. An interaction with DNA region spans residues 412–414; it reads NKK. ATP is bound at residue 446-448; the sequence is QTK. One can recognise a Toprim domain in the interval 527-640; it reads CTLILTEGDS…TLLRMPGFLV (114 aa). Residues Glu533, Asp609, and Asp611 each coordinate Mg(2+). The Topo IIA-type catalytic domain maps to 771-1273; sequence IPNIVDGLKT…PIQEIYKRDL (503 aa). The O-(5'-phospho-DNA)-tyrosine intermediate role is filled by Tyr861. The tract at residues 1007-1047 is disordered; sequence GTRKKKKEEKEKKAASRKGTKAKPTTTKRSKRVDDDDDNEK. Basic residues predominate over residues 1021–1037; sequence ASRKGTKAKPTTTKRSK. The interaction with DNA stretch occupies residues 1085–1094; sequence KLVSTINETN. Disordered stretches follow at residues 1192–1222 and 1335–1521; these read KIKKKKNAFDEEDAAISSDEEKDGAQEEQDD and IPTT…SDSD. The span at 1201 to 1222 shows a compositional bias: acidic residues; that stretch reads DEEDAAISSDEEKDGAQEEQDD. Positions 1354 to 1368 are enriched in low complexity; it reads TTSTSTSTTTSSNTK. The segment covering 1422–1438 has biased composition (acidic residues); it reads LSDESDQESDQESDQGS. The segment covering 1454–1467 has biased composition (low complexity); that stretch reads PTTIATKKATTSKS. Residues 1468 to 1480 are compositionally biased toward basic and acidic residues; it reads KVIDDKSSDDEVI. The segment covering 1503–1521 has biased composition (acidic residues); that stretch reads SDSDDDDLYDNEESSSDSD.

The protein belongs to the type II topoisomerase family. In terms of assembly, homodimer. It depends on Mg(2+) as a cofactor. Requires Mn(2+) as cofactor. Ca(2+) is required as a cofactor.

The protein localises to the nucleus. The catalysed reaction is ATP-dependent breakage, passage and rejoining of double-stranded DNA.. Functionally, control of topological states of DNA by transient breakage and subsequent rejoining of DNA strands. Topoisomerase II makes double-strand breaks. This chain is Probable DNA topoisomerase 2 (top2), found in Dictyostelium discoideum (Social amoeba).